The chain runs to 498 residues: ATP synthase subunit beta, chloroplastic (498 aa).

G172–T179 is a binding site for ATP.

Belongs to the ATPase alpha/beta chains family. In terms of assembly, F-type ATPases have 2 components, CF(1) - the catalytic core - and CF(0) - the membrane proton channel. CF(1) has five subunits: alpha(3), beta(3), gamma(1), delta(1), epsilon(1). CF(0) has four main subunits: a(1), b(1), b'(1) and c(9-12).

Its subcellular location is the plastid. The protein localises to the chloroplast thylakoid membrane. The enzyme catalyses ATP + H2O + 4 H(+)(in) = ADP + phosphate + 5 H(+)(out). Functionally, produces ATP from ADP in the presence of a proton gradient across the membrane. The catalytic sites are hosted primarily by the beta subunits. This Panax ginseng (Korean ginseng) protein is ATP synthase subunit beta, chloroplastic.